The chain runs to 513 residues: ATP synthase subunit alpha (513 aa).

169–176 contributes to the ATP binding site; sequence GDRQTGKT.

It belongs to the ATPase alpha/beta chains family. As to quaternary structure, F-type ATPases have 2 components, CF(1) - the catalytic core - and CF(0) - the membrane proton channel. CF(1) has five subunits: alpha(3), beta(3), gamma(1), delta(1), epsilon(1). CF(0) has three main subunits: a(1), b(2) and c(9-12). The alpha and beta chains form an alternating ring which encloses part of the gamma chain. CF(1) is attached to CF(0) by a central stalk formed by the gamma and epsilon chains, while a peripheral stalk is formed by the delta and b chains.

The protein localises to the cell inner membrane. It catalyses the reaction ATP + H2O + 4 H(+)(in) = ADP + phosphate + 5 H(+)(out). Its function is as follows. Produces ATP from ADP in the presence of a proton gradient across the membrane. The alpha chain is a regulatory subunit. This chain is ATP synthase subunit alpha, found in Citrobacter koseri (strain ATCC BAA-895 / CDC 4225-83 / SGSC4696).